Reading from the N-terminus, the 250-residue chain is Probable transcriptional regulatory protein PERMA_0079 (250 aa).

Belongs to the TACO1 family.

It is found in the cytoplasm. This is Probable transcriptional regulatory protein PERMA_0079 from Persephonella marina (strain DSM 14350 / EX-H1).